The chain runs to 395 residues: Argininosuccinate synthase (395 aa).

Alanine 8 to serine 16 is a binding site for ATP. Tyrosine 86 and serine 91 together coordinate L-citrulline. Glycine 116 lines the ATP pocket. Positions 118, 122, and 123 each coordinate L-aspartate. Asparagine 122 contributes to the L-citrulline binding site. 5 residues coordinate L-citrulline: arginine 126, serine 172, serine 181, glutamate 257, and tyrosine 269.

Belongs to the argininosuccinate synthase family. Type 1 subfamily. Homotetramer.

The protein resides in the cytoplasm. The enzyme catalyses L-citrulline + L-aspartate + ATP = 2-(N(omega)-L-arginino)succinate + AMP + diphosphate + H(+). It participates in amino-acid biosynthesis; L-arginine biosynthesis; L-arginine from L-ornithine and carbamoyl phosphate: step 2/3. This Methanosarcina barkeri (strain Fusaro / DSM 804) protein is Argininosuccinate synthase.